The primary structure comprises 285 residues: Bifunctional protein FolD (285 aa).

Residues 166-168 (GRS), Ser191, and Ile232 each bind NADP(+).

The protein belongs to the tetrahydrofolate dehydrogenase/cyclohydrolase family. In terms of assembly, homodimer.

It catalyses the reaction (6R)-5,10-methylene-5,6,7,8-tetrahydrofolate + NADP(+) = (6R)-5,10-methenyltetrahydrofolate + NADPH. It carries out the reaction (6R)-5,10-methenyltetrahydrofolate + H2O = (6R)-10-formyltetrahydrofolate + H(+). It functions in the pathway one-carbon metabolism; tetrahydrofolate interconversion. Its function is as follows. Catalyzes the oxidation of 5,10-methylenetetrahydrofolate to 5,10-methenyltetrahydrofolate and then the hydrolysis of 5,10-methenyltetrahydrofolate to 10-formyltetrahydrofolate. The protein is Bifunctional protein FolD of Rickettsia typhi (strain ATCC VR-144 / Wilmington).